Here is a 591-residue protein sequence, read N- to C-terminus: MHAYRSHTCTELNAAHVGQEVRLSGWVHRVRDHGGVLFLDLRDHYGITQVIADADSPAFAELETVRAEWVIRIEGRVKARDASLVNPKLATGEIEVYATGMSVLGAADELPLPVFGETDYPEETRLTYRFLDLRREKLHQNMMLRSNVVRSLRNRMWGAGFNEFQTPIITASSPEGARDFLVPSRLHPGKFYALPQAPQQFKQLIMVAGFDRYFQIAPCFRDEDPRADRSPTDFYQLDIEMSFVEQEDVFAAVQPVIQGLFEEFGHGKRVDADWPRIAYRDAMLWYGSDKPDLRNPIKMQVVSEHFAGSGFAIFAKLLENEGTEIRAIPAPTGGSRKFCDRMNAFAQSQGLPGMGYIFWRKGDDGAMEAAGPLAKNIGPERTEAIRQQLGLGEGDAAFFLGGKPETFEAVAGRARTEIGRELGLTEENCFKFAWIVDFPMYEKDDEGKIDFSHNPFSMPQGGMEALEGDPLKVHAYQYDLACNGYELISGGIRNHKPEIMFKAFELAGYPKEEVEKRFGGMVKAFRYGAPPHGGCAAGIDRIVMLLADEANIREVIMFPMNQRAEDLLMGAPSEPTNEQLRELRLRVVPKD.

Position 175 (E175) interacts with L-aspartate. The tract at residues 199 to 202 (QQFK) is aspartate. R221 and H453 together coordinate L-aspartate. Position 221–223 (221–223 (RDE)) interacts with ATP. E486 is an ATP binding site. R493 provides a ligand contact to L-aspartate. Position 538 to 541 (538 to 541 (GIDR)) interacts with ATP.

This sequence belongs to the class-II aminoacyl-tRNA synthetase family. Type 1 subfamily. As to quaternary structure, homodimer.

The protein resides in the cytoplasm. It catalyses the reaction tRNA(Asx) + L-aspartate + ATP = L-aspartyl-tRNA(Asx) + AMP + diphosphate. In terms of biological role, aspartyl-tRNA synthetase with relaxed tRNA specificity since it is able to aspartylate not only its cognate tRNA(Asp) but also tRNA(Asn). Reaction proceeds in two steps: L-aspartate is first activated by ATP to form Asp-AMP and then transferred to the acceptor end of tRNA(Asp/Asn). The sequence is that of Aspartate--tRNA(Asp/Asn) ligase from Cereibacter sphaeroides (strain ATCC 17029 / ATH 2.4.9) (Rhodobacter sphaeroides).